Here is a 382-residue protein sequence, read N- to C-terminus: Lipid-A-disaccharide synthase (382 aa).

Belongs to the LpxB family.

The enzyme catalyses 2-N,3-O-bis[(3R)-3-hydroxytetradecanoyl]-alpha-D-glucosaminyl 1-phosphate + UDP-2-N,3-O-bis[(3R)-3-hydroxytetradecanoyl]-alpha-D-glucosamine = lipid A disaccharide (E. coli) + UDP + H(+). The catalysed reaction is a lipid X + a UDP-2-N,3-O-bis[(3R)-3-hydroxyacyl]-alpha-D-glucosamine = a lipid A disaccharide + UDP + H(+). It functions in the pathway glycolipid biosynthesis; lipid IV(A) biosynthesis; lipid IV(A) from (3R)-3-hydroxytetradecanoyl-[acyl-carrier-protein] and UDP-N-acetyl-alpha-D-glucosamine: step 5/6. Condensation of UDP-2,3-diacylglucosamine and 2,3-diacylglucosamine-1-phosphate to form lipid A disaccharide, a precursor of lipid A, a phosphorylated glycolipid that anchors the lipopolysaccharide to the outer membrane of the cell. This chain is Lipid-A-disaccharide synthase, found in Salmonella typhimurium (strain LT2 / SGSC1412 / ATCC 700720).